The following is a 337-amino-acid chain: Nucleoid-associated protein HS_0228 (337 aa).

Belongs to the YejK family.

It localises to the cytoplasm. It is found in the nucleoid. The sequence is that of Nucleoid-associated protein HS_0228 from Histophilus somni (strain 129Pt) (Haemophilus somnus).